Here is a 226-residue protein sequence, read N- to C-terminus: DNA mismatch repair protein MutH (226 aa).

The protein belongs to the MutH family.

The protein resides in the cytoplasm. Its function is as follows. Sequence-specific endonuclease that cleaves unmethylated GATC sequences. It is involved in DNA mismatch repair. The sequence is that of DNA mismatch repair protein MutH from Haemophilus ducreyi (strain 35000HP / ATCC 700724).